We begin with the raw amino-acid sequence, 355 residues long: Fructose-1,6-bisphosphatase (355 aa).

Residues 25-30 and 37-41 each bind AMP; these read ILDQQH and TGEFS. Mg(2+) is bound by residues Asp-78 and Glu-107. 121 to 122 serves as a coordination point for AMP; the sequence is KY. Residues Asp-127, Ile-129, and Asp-130 each coordinate Mg(2+). 130–133 lines the substrate pocket; it reads DGSS. Lys-149 provides a ligand contact to AMP. Substrate contacts are provided by residues 230 to 233, 263 to 268, Tyr-284, and 294 to 296; these read NEGN, RYIGSM, and KLR. Glu-300 contributes to the Mg(2+) binding site.

This sequence belongs to the FBPase class 1 family. As to quaternary structure, homotetramer. Mg(2+) serves as cofactor.

The catalysed reaction is beta-D-fructose 1,6-bisphosphate + H2O = beta-D-fructose 6-phosphate + phosphate. It functions in the pathway carbohydrate biosynthesis; gluconeogenesis. With respect to regulation, subject to complex allosteric regulation. The enzyme can assume an active R-state, or an inactive T-state. Intermediate conformations may exist. AMP acts as allosteric inhibitor. AMP binding affects the turnover of bound substrate and not the affinity for substrate. In Kluyveromyces lactis (strain ATCC 8585 / CBS 2359 / DSM 70799 / NBRC 1267 / NRRL Y-1140 / WM37) (Yeast), this protein is Fructose-1,6-bisphosphatase (FBP1).